The following is a 488-amino-acid chain: Inosine-5'-monophosphate dehydrogenase (488 aa).

CBS domains lie at Ile-94 to Val-150 and Met-154 to Glu-215. Residues Asp-249, Asp-249 to Ser-251, and Gly-299 to Gly-301 each bind NAD(+). K(+) contacts are provided by Gly-301 and Gly-303. Residue Ser-304 participates in IMP binding. Position 306 (Cys-306) interacts with K(+). Cys-306 functions as the Thioimidate intermediate in the catalytic mechanism. IMP is bound by residues Asp-339–Gly-341, Gly-362–Ser-363, and Tyr-386–Gly-390. Arg-402 acts as the Proton acceptor in catalysis. Residue Glu-416 coordinates IMP. K(+) contacts are provided by Glu-470, Ser-471, and His-472.

Belongs to the IMPDH/GMPR family. As to quaternary structure, homotetramer. The cofactor is K(+).

The enzyme catalyses IMP + NAD(+) + H2O = XMP + NADH + H(+). Its pathway is purine metabolism; XMP biosynthesis via de novo pathway; XMP from IMP: step 1/1. Its activity is regulated as follows. Mycophenolic acid (MPA) is a non-competitive inhibitor that prevents formation of the closed enzyme conformation by binding to the same site as the amobile flap. In contrast, mizoribine monophosphate (MZP) is a competitive inhibitor that induces the closed conformation. MPA is a potent inhibitor of mammalian IMPDHs but a poor inhibitor of the bacterial enzymes. MZP is a more potent inhibitor of bacterial IMPDH. In terms of biological role, catalyzes the conversion of inosine 5'-phosphate (IMP) to xanthosine 5'-phosphate (XMP), the first committed and rate-limiting step in the de novo synthesis of guanine nucleotides, and therefore plays an important role in the regulation of cell growth. The polypeptide is Inosine-5'-monophosphate dehydrogenase (Haemophilus influenzae (strain ATCC 51907 / DSM 11121 / KW20 / Rd)).